Consider the following 487-residue polypeptide: V-type proton ATPase subunit B3 (487 aa).

The protein belongs to the ATPase alpha/beta chains family. In terms of assembly, V-ATPase is a heteromultimeric enzyme composed of a peripheral catalytic V1 complex (components A to H) attached to an integral membrane V0 proton pore complex (components: a, c, c'', d and e).

The protein localises to the vacuole membrane. Its function is as follows. Non-catalytic subunit of the peripheral V1 complex of vacuolar ATPase. V-ATPase is responsible for acidifying a variety of intracellular compartments in eukaryotic cells. The sequence is that of V-type proton ATPase subunit B3 (VHA-B3) from Arabidopsis thaliana (Mouse-ear cress).